The following is a 508-amino-acid chain: Hydroxymethylglutaryl-CoA synthase, mitochondrial (508 aa).

The transit peptide at 1 to 37 (MQRLLTPVKRILQLTRAVQETSLTPARLLPVAHQRFS) directs the protein to the mitochondrion. Position 52 is an N6-succinyllysine (Lys52). (3S)-3-hydroxy-3-methylglutaryl-CoA is bound by residues Glu80 and Ala81. Residue Lys83 is modified to N6-acetyllysine; alternate. Lys83 is subject to N6-succinyllysine; alternate. The active-site Proton donor/acceptor is Glu132. Cys166, Asn204, and Thr208 together coordinate (3S)-3-hydroxy-3-methylglutaryl-CoA. Cys166 serves as the catalytic Acyl-thioester intermediate. Residue Lys221 is modified to N6-succinyllysine. Position 243 is an N6-acetyllysine (Lys243). Lys256 bears the N6-acetyllysine; alternate mark. Lys256 is subject to N6-succinyllysine; alternate. 2 residues coordinate (3S)-3-hydroxy-3-methylglutaryl-CoA: Ser258 and His301. His301 (proton donor/acceptor) is an active-site residue. N6-acetyllysine is present on Lys306. Lys310 contacts (3S)-3-hydroxy-3-methylglutaryl-CoA. An N6-acetyllysine; alternate modification is found at Lys310. Lys310 is modified (N6-succinyllysine; alternate). Lys333 bears the N6-succinyllysine mark. Residues Lys342, Lys350, Lys354, and Lys358 each carry the N6-acetyllysine; alternate modification. 4 positions are modified to N6-succinyllysine; alternate: Lys342, Lys350, Lys354, and Lys358. Residues Asn380 and Ser414 each contribute to the (3S)-3-hydroxy-3-methylglutaryl-CoA site. Ser433 bears the Phosphoserine mark. Position 437 is an N6-acetyllysine (Lys437). Phosphoserine is present on Ser440. Lys447 is subject to N6-acetyllysine; alternate. Lys447 is modified (N6-succinyllysine; alternate). A Phosphoserine modification is found at Ser456. N6-acetyllysine; alternate is present on Lys473. An N6-succinyllysine; alternate modification is found at Lys473. The residue at position 477 (Ser477) is a Phosphoserine.

It belongs to the thiolase-like superfamily. HMG-CoA synthase family. Homodimer. In terms of processing, succinylated. Desuccinylated by SIRT5. Succinylation, at least at Lys-83 and Lys-310, inhibits the enzymatic activity. In terms of tissue distribution, expression in liver is 200-fold higher than in any other tissue. Low expression in colon, kidney, testis, and pancreas. Very low expression in heart and skeletal muscle. Not detected in brain. Highest expression detected in heart and skeletal muscle.

The protein resides in the mitochondrion. It catalyses the reaction acetoacetyl-CoA + acetyl-CoA + H2O = (3S)-3-hydroxy-3-methylglutaryl-CoA + CoA + H(+). It functions in the pathway metabolic intermediate biosynthesis; (R)-mevalonate biosynthesis; (R)-mevalonate from acetyl-CoA: step 2/3. In terms of biological role, catalyzes the first irreversible step in ketogenesis, condensing acetyl-CoA to acetoacetyl-CoA to form HMG-CoA, which is converted by HMG-CoA reductase (HMGCR) into mevalonate. This is Hydroxymethylglutaryl-CoA synthase, mitochondrial (HMGCS2) from Homo sapiens (Human).